The chain runs to 1259 residues: Clustered mitochondria protein homolog (1259 aa).

Polar residues predominate over residues 1-27 (MSQTNGNMEHSKETPQSQEVEQLTNGN). Residues 1-38 (MSQTNGNMEHSKETPQSQEVEQLTNGNHPEEQQEEEEN) are disordered. The 245-residue stretch at 324 to 568 (DITRSQESYL…RVTPLDVMWQ (245 aa)) folds into the Clu domain. 2 stretches are compositionally biased toward basic and acidic residues: residues 612–628 (AEAEKEKPAESSESKEQ) and 634–647 (TEEKTEESSDQERV). Disordered stretches follow at residues 612–647 (AEAEKEKPAESSESKEQDSEEKTEEKTEESSDQERV) and 881–908 (VVNGANNAAQDEGKKKKKKGADKSPSRA). TPR repeat units follow at residues 982-1015 (AKLYHQLSMLYYQTDEKEAAVELARKAVIVTERT), 1024-1057 (ILAYLNLSLFEHASGNTKTALVYIKHAMDLWKII), and 1066-1099 (ITTMNNAAVMLQHLKQYADSRKWFEASLSVCESL). 2 disordered regions span residues 1192-1215 (TKVQPQVGQTAPEASGAKNAANAS) and 1229-1259 (EGGDTSSSRSKQKKRAAASNPKLRGSKKSSA).

This sequence belongs to the CLU family. In terms of assembly, may associate with the eukaryotic translation initiation factor 3 (eIF-3) complex.

The protein localises to the cytoplasm. MRNA-binding protein involved in proper cytoplasmic distribution of mitochondria. The polypeptide is Clustered mitochondria protein homolog (Aspergillus clavatus (strain ATCC 1007 / CBS 513.65 / DSM 816 / NCTC 3887 / NRRL 1 / QM 1276 / 107)).